Reading from the N-terminus, the 158-residue chain is Transcription elongation factor GreA (158 aa).

A coiled-coil region spans residues 1 to 26 (MNKVPLTEKGAQQLREELQELKTVVR).

This sequence belongs to the GreA/GreB family.

Functionally, necessary for efficient RNA polymerase transcription elongation past template-encoded arresting sites. The arresting sites in DNA have the property of trapping a certain fraction of elongating RNA polymerases that pass through, resulting in locked ternary complexes. Cleavage of the nascent transcript by cleavage factors such as GreA or GreB allows the resumption of elongation from the new 3'terminus. GreA releases sequences of 2 to 3 nucleotides. This is Transcription elongation factor GreA from Nitrosococcus oceani (strain ATCC 19707 / BCRC 17464 / JCM 30415 / NCIMB 11848 / C-107).